A 520-amino-acid polypeptide reads, in one-letter code: Kelch domain-containing protein 4 (520 aa).

The segment covering 1 to 10 has biased composition (basic residues); that stretch reads MGKKGKKEKK. The segment at 1–33 is disordered; that stretch reads MGKKGKKEKKGRGAEKTAAKMEKKVSKRSRKEE. A compositionally biased stretch (basic and acidic residues) spans 11–24; the sequence is GRGAEKTAAKMEKK. 5 Kelch repeats span residues 77–129, 133–187, 188–241, 243–289, and 308–361; these read ELIL…VVPQ, QLWV…AWKR, QLIL…VTPQ, GIVV…MNPS, and QTLF…RRGR. Disordered stretches follow at residues 346 to 379, 402 to 431, and 481 to 520; these read QLKG…AGTQ, LTAP…GPCP, and DPET…GAED. A phosphoserine mark is found at S413 and S418. The stretch at 443-494 is one Kelch 6 repeat; that stretch reads VLYVYGGMFEAGDRQVTLSDLHCLDLHRMEAWKALVEMDPETQEWLEETDSE.

The chain is Kelch domain-containing protein 4 (KLHDC4) from Homo sapiens (Human).